A 1072-amino-acid chain; its full sequence is Carbamoyl phosphate synthase large chain (1072 aa).

The carboxyphosphate synthetic domain stretch occupies residues 1-401 (MPKRLDINTI…SLLKAVRSLE (401 aa)). Residues R129, R169, G175, G176, K208, I210, E215, G241, V242, H243, Q284, and E298 each coordinate ATP. Residues 133–327 (RTLMQDLNEP…IAKLAAKIAV (195 aa)) enclose the ATP-grasp 1 domain. Positions 284, 298, and 300 each coordinate Mg(2+). Mn(2+) contacts are provided by Q284, E298, and N300. The segment at 402-546 (LGIYHLELDH…YSTYAEENES (145 aa)) is oligomerization domain. The carbamoyl phosphate synthetic domain stretch occupies residues 547-929 (IVTDRKSVVV…ALYKGLVASG (383 aa)). The region spanning 671–861 (EAALTKLGIP…MANVATKVIL (191 aa)) is the ATP-grasp 2 domain. The ATP site is built by R707, R746, E752, G777, V778, H779, S780, Q820, and E832. Mg(2+)-binding residues include Q820, E832, and N834. Positions 820, 832, and 834 each coordinate Mn(2+). The 143-residue stretch at 930 to 1072 (INIPTHGSVI…QTKRHEVVHA (143 aa)) folds into the MGS-like domain. The allosteric domain stretch occupies residues 930 to 1072 (INIPTHGSVI…QTKRHEVVHA (143 aa)).

This sequence belongs to the CarB family. In terms of assembly, composed of two chains; the small (or glutamine) chain promotes the hydrolysis of glutamine to ammonia, which is used by the large (or ammonia) chain to synthesize carbamoyl phosphate. Tetramer of heterodimers (alpha,beta)4. Requires Mg(2+) as cofactor. It depends on Mn(2+) as a cofactor.

It catalyses the reaction hydrogencarbonate + L-glutamine + 2 ATP + H2O = carbamoyl phosphate + L-glutamate + 2 ADP + phosphate + 2 H(+). It carries out the reaction hydrogencarbonate + NH4(+) + 2 ATP = carbamoyl phosphate + 2 ADP + phosphate + 2 H(+). Its pathway is amino-acid biosynthesis; L-arginine biosynthesis; carbamoyl phosphate from bicarbonate: step 1/1. It functions in the pathway pyrimidine metabolism; UMP biosynthesis via de novo pathway; (S)-dihydroorotate from bicarbonate: step 1/3. Large subunit of the glutamine-dependent carbamoyl phosphate synthetase (CPSase). CPSase catalyzes the formation of carbamoyl phosphate from the ammonia moiety of glutamine, carbonate, and phosphate donated by ATP, constituting the first step of 2 biosynthetic pathways, one leading to arginine and/or urea and the other to pyrimidine nucleotides. The large subunit (synthetase) binds the substrates ammonia (free or transferred from glutamine from the small subunit), hydrogencarbonate and ATP and carries out an ATP-coupled ligase reaction, activating hydrogencarbonate by forming carboxy phosphate which reacts with ammonia to form carbamoyl phosphate. This Bacillus cereus (strain ATCC 10987 / NRS 248) protein is Carbamoyl phosphate synthase large chain.